The following is a 136-amino-acid chain: Inner membrane protein YbhQ (136 aa).

Topologically, residues 1-12 (MKWQQRVRVATG) are cytoplasmic. The chain crosses the membrane as a helical span at residues 13–33 (LSCWQIMLHLLVVALLVVGWM). Residues 34-37 (SKTL) are Periplasmic-facing. Residues 38 to 58 (VHVGVGLCALYCVTVVMMLVF) form a helical membrane-spanning segment. At 59–71 (QRHPEQRWREVAD) the chain is on the cytoplasmic side. The chain crosses the membrane as a helical span at residues 72 to 92 (VLEELTTTWYFGAALIVLWLL). Residues 93 to 99 (SRVLENN) lie on the Periplasmic side of the membrane. Residues 100 to 120 (FLLAIAGLAILAGPAVVSLLA) form a helical membrane-spanning segment. Residues 121 to 136 (KDKKLHHLTSKHRVRR) are Cytoplasmic-facing.

The protein localises to the cell inner membrane. The sequence is that of Inner membrane protein YbhQ (ybhQ) from Escherichia coli O157:H7.